The sequence spans 485 residues: Rhamnulokinase (485 aa).

8–12 provides a ligand contact to ATP; the sequence is ASSGR. Substrate contacts are provided by residues G78 and 231 to 233; that span reads HDT. The active-site Proton acceptor is the D232. Residue T254 participates in ATP binding. N291 contacts substrate. An ATP-binding site is contributed by Q299. A disulfide bridge links C348 with C365. G397 serves as a coordination point for ATP. C408 and C412 are oxidised to a cystine.

This sequence belongs to the rhamnulokinase family. The cofactor is Mg(2+).

It catalyses the reaction L-rhamnulose + ATP = L-rhamnulose 1-phosphate + ADP + H(+). It functions in the pathway carbohydrate degradation; L-rhamnose degradation; glycerone phosphate from L-rhamnose: step 2/3. Involved in the catabolism of L-rhamnose (6-deoxy-L-mannose). Catalyzes the transfer of the gamma-phosphate group from ATP to the 1-hydroxyl group of L-rhamnulose to yield L-rhamnulose 1-phosphate. The protein is Rhamnulokinase of Yersinia pestis bv. Antiqua (strain Angola).